Reading from the N-terminus, the 330-residue chain is Glycerol-3-phosphate dehydrogenase [NAD(P)+] (330 aa).

NADPH-binding residues include W11, R33, and K105. K105, G133, and S135 together coordinate sn-glycerol 3-phosphate. Residue A137 coordinates NADPH. Residues K188, D241, S251, R252, and N253 each contribute to the sn-glycerol 3-phosphate site. K188 acts as the Proton acceptor in catalysis. An NADPH-binding site is contributed by R252. 2 residues coordinate NADPH: V276 and E278.

This sequence belongs to the NAD-dependent glycerol-3-phosphate dehydrogenase family.

The protein resides in the cytoplasm. It carries out the reaction sn-glycerol 3-phosphate + NAD(+) = dihydroxyacetone phosphate + NADH + H(+). It catalyses the reaction sn-glycerol 3-phosphate + NADP(+) = dihydroxyacetone phosphate + NADPH + H(+). It functions in the pathway membrane lipid metabolism; glycerophospholipid metabolism. Catalyzes the reduction of the glycolytic intermediate dihydroxyacetone phosphate (DHAP) to sn-glycerol 3-phosphate (G3P), the key precursor for phospholipid synthesis. This Acidovorax sp. (strain JS42) protein is Glycerol-3-phosphate dehydrogenase [NAD(P)+].